A 70-amino-acid chain; its full sequence is Conotoxin Cal6.11 (70 aa).

The N-terminal stretch at 1–22 (MKLTCVLIIAVLILTACQFIAA) is a signal peptide. A propeptide spanning residues 23–43 (DNTEYRKWRRSGTSTGMRLGS) is cleaved from the precursor. 3 disulfide bridges follow: Cys-46/Cys-57, Cys-50/Cys-62, and Cys-56/Cys-69. 4-hydroxyproline is present on residues Pro-48 and Pro-58. 4-carboxyglutamate is present on residues Glu-60 and Glu-67.

It belongs to the conotoxin O1 superfamily. As to expression, expressed by the venom duct.

The protein resides in the secreted. Probable neurotoxin with unknown target. Possibly targets ion channels. This Californiconus californicus (California cone) protein is Conotoxin Cal6.11.